Consider the following 398-residue polypeptide: Nocardicin C N-oxygenase (398 aa).

A disordered region spans residues 63-90; that stretch reads RARAAGREETPRVTPEAAPAGSMLSMDP. Heme contacts are provided by H93, R97, R289, H345, and C347.

The protein belongs to the cytochrome P450 family. Requires heme as cofactor.

The catalysed reaction is nocardicin C + 4 reduced [2Fe-2S]-[ferredoxin] + 2 O2 + 2 H(+) = nocardicin A + 4 oxidized [2Fe-2S]-[ferredoxin] + 3 H2O. The protein operates within antibiotic biosynthesis. Its function is as follows. Involved in the biosynthesis of the beta-lactam antibiotic nocardicin A. Catalyzes the conversion of nocardicin C to nocardicin A. Cannot use nocardicin G. In Nocardia uniformis subsp. tsuyamanensis, this protein is Nocardicin C N-oxygenase.